The primary structure comprises 361 residues: Peptide chain release factor 1 (361 aa).

Gln-237 bears the N5-methylglutamine mark. Residues 286-296 (EKRRSAEESTR) are compositionally biased toward basic and acidic residues. A disordered region spans residues 286-305 (EKRRSAEESTRRNLVSSGDR).

This sequence belongs to the prokaryotic/mitochondrial release factor family. In terms of processing, methylated by PrmC. Methylation increases the termination efficiency of RF1.

The protein localises to the cytoplasm. Its function is as follows. Peptide chain release factor 1 directs the termination of translation in response to the peptide chain termination codons UAG and UAA. The chain is Peptide chain release factor 1 from Shewanella pealeana (strain ATCC 700345 / ANG-SQ1).